The chain runs to 664 residues: E3 ubiquitin-protein ligase CHFR (664 aa).

Residues 38-89 (WTIGRRRGCDLSFPSNKLVSGDHCKLTVDEISGEVTLEDTSTNGTVINKLQV) enclose the FHA domain. 2 disordered regions span residues 170–220 (LEEP…GRSS) and 245–264 (ESKDHEELEPAKKKMKGDGE). The span at 174 to 202 (QPSTSTSDLLPTASTSSTEPELTSAGQKH) shows a compositional bias: polar residues. Residues 203-215 (SSSSGPGNTSISP) are compositionally biased toward low complexity. Over residues 245 to 263 (ESKDHEELEPAKKKMKGDG) the composition is skewed to basic and acidic residues. The RING-type zinc finger occupies 303-342 (CIICQDLLHDCVSLQPCMHTFCAACYSGWMERSSLCPTCR). Phosphothreonine is present on Thr385. The segment at 389–413 (LQPKVRRSFSDEEGSSEDLLELSDV) is disordered. Residues 399–413 (DEEGSSEDLLELSDV) show a composition bias toward acidic residues. A PBZ-type zinc finger spans residues 633 to 655 (PDCYWGRNCRTQVKAHHAMKFNH).

It belongs to the CHFR family. Interacts with HDAC1 and HDAC2. Interacts with PML (with sumoylated form of PML). Poly-ADP-ribosylated. In addition to binding non covalently poly(ADP-ribose) via its PBZ-type zinc finger, the protein is also covalently poly-ADP-ribosylated by PARP1. In terms of processing, autoubiquitinated; may regulate its cellular level. Post-translationally, phosphorylated by PKB. Phosphorylation may affect its E3 ligase activity.

The protein resides in the nucleus. Its subcellular location is the PML body. The catalysed reaction is S-ubiquitinyl-[E2 ubiquitin-conjugating enzyme]-L-cysteine + [acceptor protein]-L-lysine = [E2 ubiquitin-conjugating enzyme]-L-cysteine + N(6)-ubiquitinyl-[acceptor protein]-L-lysine.. It participates in protein modification; protein ubiquitination. In terms of biological role, E3 ubiquitin-protein ligase that functions in the antephase checkpoint by actively delaying passage into mitosis in response to microtubule poisons. Acts in early prophase before chromosome condensation, when the centrosome move apart from each other along the periphery of the nucleus. Probably involved in signaling the presence of mitotic stress caused by microtubule poisons by mediating the 'Lys-48'-linked ubiquitination of target proteins, leading to their degradation by the proteasome. Promotes the ubiquitination and subsequent degradation of AURKA and PLK1. Probably acts as a tumor suppressor, possibly by mediating the polyubiquitination of HDAC1, leading to its degradation. May also promote the formation of 'Lys-63'-linked polyubiquitin chains and functions with the specific ubiquitin-conjugating UBC13-MMS2 (UBE2N-UBE2V2) heterodimer. Substrates that are polyubiquitinated at 'Lys-63' are usually not targeted for degradation, but are rather involved in signaling cellular stress. This chain is E3 ubiquitin-protein ligase CHFR (Chfr), found in Mus musculus (Mouse).